The primary structure comprises 599 residues: Chaperone protein DnaK (599 aa).

Threonine 187 carries the post-translational modification Phosphothreonine; by autocatalysis. The tract at residues 575-599 (AQQAATENSKDSDTVEAEIVDDKAN) is disordered.

Belongs to the heat shock protein 70 family.

Acts as a chaperone. This is Chaperone protein DnaK from Mycoplasmopsis pulmonis (strain UAB CTIP) (Mycoplasma pulmonis).